Here is a 342-residue protein sequence, read N- to C-terminus: 4-hydroxy-2-oxovalerate aldolase (342 aa).

The region spanning 5–257 (ITLHDMTLRD…DTGVDVWKIQ (253 aa)) is the Pyruvate carboxyltransferase domain. 13–14 (RD) is a substrate binding site. Asp14 is a binding site for Mn(2+). Catalysis depends on His17, which acts as the Proton acceptor. Substrate-binding residues include Ser167 and His196. His196 and His198 together coordinate Mn(2+). Tyr287 provides a ligand contact to substrate.

It belongs to the 4-hydroxy-2-oxovalerate aldolase family.

It carries out the reaction (S)-4-hydroxy-2-oxopentanoate = acetaldehyde + pyruvate. The protein is 4-hydroxy-2-oxovalerate aldolase of Acidovorax sp. (strain JS42).